The sequence spans 530 residues: Per os infectivity factor 1 (530 aa).

An N-terminal signal peptide occupies residues 1–15 (MHFAIILLFLLVIIA).

Forms the PIF complex together with PIF2 and PIF3. The complex also interacts with per os infectivity factor PIF0.

Its subcellular location is the virion membrane. Its function is as follows. Per os infectivity factor that mediates the specific binding of occluded virions (ODV) to the host midgut target cells. In Autographa californica nuclear polyhedrosis virus (AcMNPV), this protein is Per os infectivity factor 1.